Here is a 141-residue protein sequence, read N- to C-terminus: Large ribosomal subunit protein uL13 (141 aa).

Belongs to the universal ribosomal protein uL13 family. Part of the 50S ribosomal subunit.

In terms of biological role, this protein is one of the early assembly proteins of the 50S ribosomal subunit, although it is not seen to bind rRNA by itself. It is important during the early stages of 50S assembly. The sequence is that of Large ribosomal subunit protein uL13 from Helicobacter pylori (strain P12).